The chain runs to 560 residues: Involucrin (560 aa).

Over residues 1–15 (MSQQHTLPVTLSPAL) the composition is skewed to polar residues. Disordered regions lie at residues 1–131 (MSQQ…KLLD), 150–359 (EQLL…LVQQ), and 404–534 (GQLK…QSAL). Positions 76–91 (EQQQQEPQEQELQQQH) are enriched in low complexity. Basic and acidic residues-rich tracts occupy residues 92–115 (WEQH…KAQR) and 159–172 (QEGH…REGQ). The span at 189-211 (QKGQLELPEQQEGQLELPEQQEG) shows a compositional bias: low complexity. 3 stretches are compositionally biased toward basic and acidic residues: residues 212 to 231 (QLKH…HQEG), 252 to 264 (QLKH…KQPE), and 274 to 320 (KHLE…EHQE). A compositionally biased stretch (low complexity) spans 321–334 (GQLGLPEQQVQQLK). Composition is skewed to basic and acidic residues over residues 335 to 353 (QLEK…EGQL), 404 to 420 (GQLK…KHLE), 454 to 463 (QLKHLEKQEA), 476 to 486 (KHLEQQEKQLE), and 494 to 510 (QLKH…DLEQ).

This sequence belongs to the involucrin family. As to quaternary structure, directly or indirectly cross-linked to cornifelin (CNFN). In terms of processing, substrate of transglutaminase. Specific glutamines or lysines are cross-linked to keratins, desmoplakin and to inter involucrin molecules. As to expression, keratinocytes of epidermis and other stratified squamous epithelia.

It localises to the cytoplasm. In terms of biological role, part of the insoluble cornified cell envelope (CE) of stratified squamous epithelia. The sequence is that of Involucrin (IVL) from Pan paniscus (Pygmy chimpanzee).